Consider the following 212-residue polypeptide: Agglutinin isolectin 1 (212 aa).

Positions 1–26 (MKMMSTRALALGAAAVLAFAAATAQA) are cleaved as a signal peptide. Position 27 is a pyrrolidone carboxylic acid (Gln27). 4 Chitin-binding type-1 domains span residues 27–68 (QRCG…ACWT), 69–111 (SKRC…PCRA), 112–154 (DIKC…ACST), and 155–197 (DKPC…GCDG). 16 disulfide bridges follow: Cys29–Cys44, Cys38–Cys50, Cys43–Cys57, Cys61–Cys66, Cys72–Cys87, Cys81–Cys93, Cys86–Cys100, Cys104–Cys109, Cys115–Cys130, Cys124–Cys136, Cys129–Cys143, Cys147–Cys152, Cys158–Cys173, Cys167–Cys179, Cys172–Cys186, and Cys190–Cys195. 36–38 (MEC) is a binding site for substrate. A substrate-binding site is contributed by 88-99 (SQYGYCGFGAEY). 140–141 (SE) contacts substrate. The propeptide occupies 198-212 (VFAEAITANSTLLQE).

Homodimer, u-shaped.

Its function is as follows. N-acetyl-D-glucosamine / N-acetyl-D-neuraminic acid binding lectin. This Triticum aestivum (Wheat) protein is Agglutinin isolectin 1.